Here is a 908-residue protein sequence, read N- to C-terminus: Zinc finger CCCH domain-containing protein 41 (908 aa).

Over residues 1–13 (MELSVSSPKQSVL) the composition is skewed to polar residues. The segment at 1-124 (MELSVSSPKQ…GRGNYGSWAQ (124 aa)) is disordered. The segment covering 20–34 (SDPEEEHEISEEEDD) has biased composition (acidic residues). 2 stretches are compositionally biased toward polar residues: residues 48–59 (SQSLEQDSSDQA) and 90–105 (GQRV…SNPM). Residues 200–228 (GIPRQRCRDFEERGFCLRGDMCPMEHGMN) form a C3H1-type zinc finger. A disordered region spans residues 333–375 (NVAPLDDSNQDAAENGCGIRDSRSTSQSVWGRMKGSNSQANSK). A compositionally biased stretch (polar residues) spans 356 to 373 (STSQSVWGRMKGSNSQAN). An RRM domain is found at 438-510 (RTLFVNYVPH…RFIKLWWANR (73 aa)). 3 disordered regions span residues 558–590 (PTFQ…LQQK), 629–695 (VVKR…KQRP), and 807–908 (RESN…QIHQ). The span at 559–588 (TFQTGGAPSSSEQPKPVVVTTSGPKVTPLQ) shows a compositional bias: polar residues. Residues 587 to 630 (LQQKKADTLERLKETLRKKQEMLEQKRNEYRKKLATLEKQGTVV) are a coiled coil. Over residues 630-647 (VKREEADEPDAKRVKLDT) the composition is skewed to basic and acidic residues. Ser657 carries the phosphoserine modification. The span at 677–688 (AKLSTETPSPDS) shows a compositional bias: polar residues. Residues 807–828 (RESNNNNNNSNSLSVSRDNLSS) show a composition bias toward low complexity. Residues 846 to 863 (KTSSTEEPENTNVSGDND) are compositionally biased toward polar residues. The segment covering 865–886 (TLDKQETKESDNDNNKSNHESI) has biased composition (basic and acidic residues). Acidic residues predominate over residues 898-908 (TDEEQSEQIHQ).

The chain is Zinc finger CCCH domain-containing protein 41 from Arabidopsis thaliana (Mouse-ear cress).